Here is a 693-residue protein sequence, read N- to C-terminus: Translation factor GUF1 homolog, mitochondrial (693 aa).

The span at 51–63 shows a compositional bias: polar residues; sequence SSSSTEKPTTSGT. A disordered region spans residues 51–78; that stretch reads SSSSTEKPTTSGTINGGGGKQKAASQPK. Positions 88–270 constitute a tr-type G domain; the sequence is QKIRNFSIIA…RIVQMVPPPP (183 aa). GTP-binding positions include 97–104, 163–167, and 217–220; these read AHIDHGKS, DTPGH, and NKID.

The protein belongs to the TRAFAC class translation factor GTPase superfamily. Classic translation factor GTPase family. LepA subfamily.

Its subcellular location is the mitochondrion inner membrane. It catalyses the reaction GTP + H2O = GDP + phosphate + H(+). Functionally, promotes mitochondrial protein synthesis. May act as a fidelity factor of the translation reaction, by catalyzing a one-codon backward translocation of tRNAs on improperly translocated ribosomes. Binds to mitochondrial ribosomes in a GTP-dependent manner. This is Translation factor GUF1 homolog, mitochondrial from Phaeodactylum tricornutum (strain CCAP 1055/1).